Here is a 238-residue protein sequence, read N- to C-terminus: 2-C-methyl-D-erythritol 4-phosphate cytidylyltransferase (238 aa).

This sequence belongs to the IspD/TarI cytidylyltransferase family. IspD subfamily.

It carries out the reaction 2-C-methyl-D-erythritol 4-phosphate + CTP + H(+) = 4-CDP-2-C-methyl-D-erythritol + diphosphate. It participates in isoprenoid biosynthesis; isopentenyl diphosphate biosynthesis via DXP pathway; isopentenyl diphosphate from 1-deoxy-D-xylulose 5-phosphate: step 2/6. Its function is as follows. Catalyzes the formation of 4-diphosphocytidyl-2-C-methyl-D-erythritol from CTP and 2-C-methyl-D-erythritol 4-phosphate (MEP). The chain is 2-C-methyl-D-erythritol 4-phosphate cytidylyltransferase from Pelotomaculum thermopropionicum (strain DSM 13744 / JCM 10971 / SI).